A 183-amino-acid polypeptide reads, in one-letter code: Transcription factor 15 (183 aa).

Residues Asp24 to Ala46 are disordered. Residues Lys61–Leu113 form the bHLH domain.

As to quaternary structure, heterodimer; efficient DNA binding requires dimerization with another bHLH protein.

Its subcellular location is the nucleus. Functionally, early transcription factor that plays a key role in somitogenesis, paraxial mesoderm development and regulation of stem cell pluripotency. Essential for the mesenchymal to epithelial transition associated with somite formation. Required for somite morphogenesis, thereby regulating patterning of the axial skeleton and skeletal muscles. Also plays a key role in regulation of stem cell pluripotency. Promotes pluripotency exit of embryonic stem cells (ESCs) by priming ESCs for differentiation. Acts as a key regulator of self-renewal of hematopoietic stem cells (HSCs) by mediating HSCs quiescence and long-term self-renewal. Acts by forming a heterodimer with another helix-loop-helix (bHLH) protein, that binds DNA on E-box motifs (5'-CANNTG-3') and activates transcription of target genes. The chain is Transcription factor 15 (TCF15) from Gallus gallus (Chicken).